Reading from the N-terminus, the 493-residue chain is Glutamate--tRNA ligase (493 aa).

The 'HIGH' region signature appears at Pro9–Thr19. The short motif at Lys249–Arg253 is the 'KMSKS' region element. Lys252 is an ATP binding site.

This sequence belongs to the class-I aminoacyl-tRNA synthetase family. Glutamate--tRNA ligase type 1 subfamily. Monomer.

Its subcellular location is the cytoplasm. It carries out the reaction tRNA(Glu) + L-glutamate + ATP = L-glutamyl-tRNA(Glu) + AMP + diphosphate. Catalyzes the attachment of glutamate to tRNA(Glu) in a two-step reaction: glutamate is first activated by ATP to form Glu-AMP and then transferred to the acceptor end of tRNA(Glu). The sequence is that of Glutamate--tRNA ligase from Marinobacter nauticus (strain ATCC 700491 / DSM 11845 / VT8) (Marinobacter aquaeolei).